Consider the following 340-residue polypeptide: Heat-inducible transcription repressor HrcA (340 aa).

The protein belongs to the HrcA family.

Functionally, negative regulator of class I heat shock genes (grpE-dnaK-dnaJ and groELS operons). Prevents heat-shock induction of these operons. The protein is Heat-inducible transcription repressor HrcA of Burkholderia thailandensis (strain ATCC 700388 / DSM 13276 / CCUG 48851 / CIP 106301 / E264).